The primary structure comprises 89 residues: Large ribosomal subunit protein bL27 (89 aa).

Positions 1–21 are disordered; sequence MAHKKAGGSSRNGRDSESKRL.

Belongs to the bacterial ribosomal protein bL27 family.

In Bartonella quintana (strain Toulouse) (Rochalimaea quintana), this protein is Large ribosomal subunit protein bL27.